We begin with the raw amino-acid sequence, 611 residues long: Autophagy-related protein 22-2 (611 aa).

Positions 1 to 24 (MRADDNPSARSLHAQFPGDDTRPT) are disordered. A helical transmembrane segment spans residues 35–55 (YGWAAEVFTVCAMGSFLPITL). N-linked (GlcNAc...) asparagine glycosylation occurs at Asn78. Transmembrane regions (helical) follow at residues 116–136 (TASFAMYTFSVSVFVQAVLII), 151–171 (LLVAFAVIGSVCTMLFLSVVP), and 175–195 (IVGALFAIVANTCFGASFVLL). Asn221 is a glycosylation site (N-linked (GlcNAc...) asparagine). 2 helical membrane passes run 286–306 (IGIGYIGAVILQIICILVIIA) and 316–336 (LVLFLIGLWWFVFTIPAALWL). The N-linked (GlcNAc...) asparagine glycan is linked to Asn353. A run of 6 helical transmembrane segments spans residues 380–400 (ILLFLTAWFLLSDGIATVSGT), 414–434 (AALGLINVVTMMAGVFGAFSW), 449–469 (IIACILLFELIPIYGLLGFVP), 483–503 (WEMFPLGIVYGLVMGGLSSYC), 521–541 (ALYAITDKGSSIFGPAIVGLI), and 551–571 (AFVFLAVLIFLPLPLMLLVDV).

It belongs to the ATG22 family.

It localises to the vacuole membrane. Functionally, vacuolar effluxer which mediate the efflux of amino acids resulting from autophagic degradation. The release of autophagic amino acids allows the maintenance of protein synthesis and viability during nitrogen starvation. This chain is Autophagy-related protein 22-2 (atg22-2), found in Aspergillus clavatus (strain ATCC 1007 / CBS 513.65 / DSM 816 / NCTC 3887 / NRRL 1 / QM 1276 / 107).